A 384-amino-acid chain; its full sequence is GTPase Obg (384 aa).

Positions 1–159 (MKFIDEAKIE…RSLQLELKVL (159 aa)) constitute an Obg domain. The disordered stretch occupies residues 20-46 (ATSFRREKFVPRGGPDGGDGGKGGSVW). A compositionally biased stretch (gly residues) spans 33–43 (GPDGGDGGKGG). An OBG-type G domain is found at 160-348 (ADVGLLGMPN…LVHQINQYLT (189 aa)). GTP contacts are provided by residues 166 to 173 (GMPNAGKS), 191 to 195 (FTTLH), 213 to 216 (DIPG), 284 to 287 (NKLD), and 329 to 331 (SAL). Residues Ser173 and Thr193 each coordinate Mg(2+).

This sequence belongs to the TRAFAC class OBG-HflX-like GTPase superfamily. OBG GTPase family. Monomer. Mg(2+) serves as cofactor.

It is found in the cytoplasm. Its function is as follows. An essential GTPase which binds GTP, GDP and possibly (p)ppGpp with moderate affinity, with high nucleotide exchange rates and a fairly low GTP hydrolysis rate. Plays a role in control of the cell cycle, stress response, ribosome biogenesis and in those bacteria that undergo differentiation, in morphogenesis control. This Neisseria meningitidis serogroup C / serotype 2a (strain ATCC 700532 / DSM 15464 / FAM18) protein is GTPase Obg.